The chain runs to 310 residues: Antiviral protein II/III (310 aa).

The first 25 residues, 1-25 (MKMKVLEVVGLAISIWLMLTPPASS), serve as a signal peptide directing secretion. Cystine bridges form between C57–C284 and C106–C123. Y94 is a catalytic residue. Catalysis depends on residues Y142, E197, and R200.

The protein belongs to the ribosome-inactivating protein family. Type 1 RIP subfamily. PAP-II is expressed in early summer leaves (at protein level). PAP-III is expressed in late summer leaves (at protein level).

The enzyme catalyses Endohydrolysis of the N-glycosidic bond at one specific adenosine on the 28S rRNA.. Possesses antiviral potency. Inhibits viral infection of plants (tobacco mosaic virus). Inhibits protein synthesis in both prokaryotes and eukaryotes. The protein is Antiviral protein II/III (PAP2) of Phytolacca americana (American pokeweed).